A 535-amino-acid chain; its full sequence is Probable lipid II flippase MurJ (535 aa).

12 helical membrane-spanning segments follow: residues 90–110 (VLFT…PFIV), 131–151 (FATI…MAGM), 159–179 (FAAA…LAYA), 192–212 (DLSW…WVAV), 233–253 (LLVL…NLLI), 274–294 (IYQL…LPEL), 316–336 (FTLF…EPIV), 350–370 (TVVV…FVLI), 388–408 (IFAG…FPSL), 413–433 (IATA…ATLV), 451–471 (LVIA…WLAF), and 484–504 (LTLC…AFGI).

This sequence belongs to the MurJ/MviN family.

The protein localises to the cell inner membrane. It participates in cell wall biogenesis; peptidoglycan biosynthesis. Functionally, involved in peptidoglycan biosynthesis. Transports lipid-linked peptidoglycan precursors from the inner to the outer leaflet of the cytoplasmic membrane. This Rhizobium meliloti (strain 1021) (Ensifer meliloti) protein is Probable lipid II flippase MurJ.